Consider the following 311-residue polypeptide: Lipoyl synthase (311 aa).

The [4Fe-4S] cluster site is built by C36, C41, C47, C66, C70, C73, and S280. Positions 51 to 269 constitute a Radical SAM core domain; the sequence is RDGPGTATFM…RVAESEFGFL (219 aa).

The protein belongs to the radical SAM superfamily. Lipoyl synthase family. Requires [4Fe-4S] cluster as cofactor.

The protein resides in the cytoplasm. The enzyme catalyses [[Fe-S] cluster scaffold protein carrying a second [4Fe-4S](2+) cluster] + N(6)-octanoyl-L-lysyl-[protein] + 2 oxidized [2Fe-2S]-[ferredoxin] + 2 S-adenosyl-L-methionine + 4 H(+) = [[Fe-S] cluster scaffold protein] + N(6)-[(R)-dihydrolipoyl]-L-lysyl-[protein] + 4 Fe(3+) + 2 hydrogen sulfide + 2 5'-deoxyadenosine + 2 L-methionine + 2 reduced [2Fe-2S]-[ferredoxin]. The protein operates within protein modification; protein lipoylation via endogenous pathway; protein N(6)-(lipoyl)lysine from octanoyl-[acyl-carrier-protein]: step 2/2. Functionally, catalyzes the radical-mediated insertion of two sulfur atoms into the C-6 and C-8 positions of the octanoyl moiety bound to the lipoyl domains of lipoate-dependent enzymes, thereby converting the octanoylated domains into lipoylated derivatives. In Halobacterium salinarum (strain ATCC 29341 / DSM 671 / R1), this protein is Lipoyl synthase.